The chain runs to 208 residues: Protein-L-isoaspartate O-methyltransferase (208 aa).

The active site involves serine 59.

This sequence belongs to the methyltransferase superfamily. L-isoaspartyl/D-aspartyl protein methyltransferase family.

Its subcellular location is the cytoplasm. It carries out the reaction [protein]-L-isoaspartate + S-adenosyl-L-methionine = [protein]-L-isoaspartate alpha-methyl ester + S-adenosyl-L-homocysteine. Functionally, catalyzes the methyl esterification of L-isoaspartyl residues in peptides and proteins that result from spontaneous decomposition of normal L-aspartyl and L-asparaginyl residues. It plays a role in the repair and/or degradation of damaged proteins. The protein is Protein-L-isoaspartate O-methyltransferase of Vibrio vulnificus (strain CMCP6).